A 388-amino-acid polypeptide reads, in one-letter code: Succinate--CoA ligase [ADP-forming] subunit beta (388 aa).

The 237-residue stretch at 9–245 (KELLAGYGLP…KSQENERELK (237 aa)) folds into the ATP-grasp domain. ATP contacts are provided by residues K46, 53–55 (GRG), E100, Y103, and E108. Residues N200 and D214 each contribute to the Mg(2+) site. Residues N265 and 322–324 (GIV) each bind substrate.

It belongs to the succinate/malate CoA ligase beta subunit family. Heterotetramer of two alpha and two beta subunits. Mg(2+) is required as a cofactor.

The catalysed reaction is succinate + ATP + CoA = succinyl-CoA + ADP + phosphate. The enzyme catalyses GTP + succinate + CoA = succinyl-CoA + GDP + phosphate. It participates in carbohydrate metabolism; tricarboxylic acid cycle; succinate from succinyl-CoA (ligase route): step 1/1. In terms of biological role, succinyl-CoA synthetase functions in the citric acid cycle (TCA), coupling the hydrolysis of succinyl-CoA to the synthesis of either ATP or GTP and thus represents the only step of substrate-level phosphorylation in the TCA. The beta subunit provides nucleotide specificity of the enzyme and binds the substrate succinate, while the binding sites for coenzyme A and phosphate are found in the alpha subunit. The protein is Succinate--CoA ligase [ADP-forming] subunit beta of Neisseria meningitidis serogroup C / serotype 2a (strain ATCC 700532 / DSM 15464 / FAM18).